Here is a 209-residue protein sequence, read N- to C-terminus: Amelotin (209 aa).

The signal sequence occupies residues 1–16 (MRSTILLFCLLGSTRS). Residues 142-209 (AGANPDVQDG…ATTESANGIQ (68 aa)) form a disordered region.

It belongs to the amelotin family. Post-translationally, phosphorylated by FAM20C in vitro. In terms of processing, O-glycosylated.

It localises to the secreted. Is a promoter of calcium phosphate mineralization, playing a critical role in the formation of the compact, mineralized, aprismatic enamel surface layer during the maturation stage of amelogenesis. The sequence is that of Amelotin (AMTN) from Homo sapiens (Human).